The primary structure comprises 120 residues: Large ribosomal subunit protein uL22 (120 aa).

This sequence belongs to the universal ribosomal protein uL22 family. Part of the 50S ribosomal subunit.

Its function is as follows. This protein binds specifically to 23S rRNA; its binding is stimulated by other ribosomal proteins, e.g. L4, L17, and L20. It is important during the early stages of 50S assembly. It makes multiple contacts with different domains of the 23S rRNA in the assembled 50S subunit and ribosome. In terms of biological role, the globular domain of the protein is located near the polypeptide exit tunnel on the outside of the subunit, while an extended beta-hairpin is found that lines the wall of the exit tunnel in the center of the 70S ribosome. In Corynebacterium glutamicum (strain R), this protein is Large ribosomal subunit protein uL22.